The following is a 666-amino-acid chain: Semaphorin-7A (666 aa).

Positions 1-21 (MTPPPPGRAAPSAPRARVPGP) are disordered. The first 44 residues, 1-44 (MTPPPPGRAAPSAPRARVPGPPARLGLPLRLRLLLLLWAAAASA), serve as a signal peptide directing secretion. Low complexity predominate over residues 9–21 (AAPSAPRARVPGP). The region spanning 53–490 (RIFAVWKGHV…SQWEVSQVPL (438 aa)) is the Sema domain. A glycan (N-linked (GlcNAc...) asparagine) is linked at Asn-105. Residues Cys-120 and Cys-126 are joined by a disulfide bond. Arg-135 is modified (asymmetric dimethylarginine). Residues Cys-143 and Cys-152 are joined by a disulfide bond. N-linked (GlcNAc...) asparagine glycans are attached at residues Asn-157 and Asn-258. 7 disulfides stabilise this stretch: Cys-266/Cys-366, Cys-291/Cys-335, Cys-493/Cys-511, Cys-500/Cys-541, Cys-503/Cys-518, Cys-566/Cys-613, and Cys-587/Cys-596. Residues 267–269 (RGD) form an interaction with integrins region. The Cell attachment site signature appears at 267–269 (RGD). N-linked (GlcNAc...) asparagine glycosylation occurs at Asn-330. In terms of domain architecture, Ig-like C2-type spans 544 to 629 (PKPDKAPLQK…YFREAQHWQL (86 aa)). Asn-602 carries N-linked (GlcNAc...) asparagine glycosylation. Ala-648 is lipidated: GPI-anchor amidated alanine. Positions 649 to 666 (ASLWLGVLPTLTLGLLVH) are cleaved as a propeptide — removed in mature form.

Belongs to the semaphorin family. Interacts with ITGA1 and ITGB1. Interacts with PLXNC1. Detected in skin keratinocytes and on endothelial cells from skin blood vessels (at protein level). Expressed in fibroblasts, keratinocytes, melanocytes, placenta, testis, ovary, spleen, brain, spinal cord, lung, heart, adrenal gland, lymph nodes, thymus, intestine and kidney.

The protein localises to the cell membrane. In terms of biological role, plays an important role in integrin-mediated signaling and functions both in regulating cell migration and immune responses. Promotes formation of focal adhesion complexes, activation of the protein kinase PTK2/FAK1 and subsequent phosphorylation of MAPK1 and MAPK3. Promotes production of pro-inflammatory cytokines by monocytes and macrophages. Plays an important role in modulating inflammation and T-cell-mediated immune responses. Promotes axon growth in the embryonic olfactory bulb. Promotes attachment, spreading and dendrite outgrowth in melanocytes. This Homo sapiens (Human) protein is Semaphorin-7A (SEMA7A).